The chain runs to 502 residues: MFS-type transporeter aprT (502 aa).

The segment at 1–38 (MASPELASHHSDPSDGEGAPFLPGVDDESPESLNSDIP) is disordered. 11 consecutive transmembrane segments (helical) span residues 45–65 (HGLI…GPMI), 114–136 (IGYR…GLLA), 150–170 (VGFV…NIFP), 175–195 (WFGA…ALFW), 214–234 (FGIA…FVMK), 239–259 (VPLM…NLLP), 302–322 (VAVI…AFLV), 336–356 (ATLL…FILP), 380–400 (VMLL…NTLI), 403–423 (LLLH…ITGL), and 464–484 (LWIG…ALVL). N-linked (GlcNAc...) asparagine glycosylation is present at asparagine 495.

This sequence belongs to the major facilitator superfamily.

The protein resides in the cell membrane. Functionally, MFS-rype transporer; part of the gene cluster that mediates the biosynthesis of the asperipin-2a, a bicyclic peptide that possesses two macrocyclic ether rings consisting of 14- and 17-membered paracyclophans. AprT is likely to be involved in the cellular export of asperipin-2a. This chain is MFS-type transporeter aprT, found in Aspergillus flavus (strain ATCC 200026 / FGSC A1120 / IAM 13836 / NRRL 3357 / JCM 12722 / SRRC 167).